Reading from the N-terminus, the 270-residue chain is Ribosomal RNA small subunit methyltransferase A (270 aa).

The S-adenosyl-L-methionine site is built by histidine 11, leucine 13, glycine 38, glutamate 59, aspartate 84, and asparagine 109.

It belongs to the class I-like SAM-binding methyltransferase superfamily. rRNA adenine N(6)-methyltransferase family. RsmA subfamily.

Its subcellular location is the cytoplasm. It carries out the reaction adenosine(1518)/adenosine(1519) in 16S rRNA + 4 S-adenosyl-L-methionine = N(6)-dimethyladenosine(1518)/N(6)-dimethyladenosine(1519) in 16S rRNA + 4 S-adenosyl-L-homocysteine + 4 H(+). Its function is as follows. Specifically dimethylates two adjacent adenosines (A1518 and A1519) in the loop of a conserved hairpin near the 3'-end of 16S rRNA in the 30S particle. May play a critical role in biogenesis of 30S subunits. This is Ribosomal RNA small subunit methyltransferase A from Crocosphaera subtropica (strain ATCC 51142 / BH68) (Cyanothece sp. (strain ATCC 51142)).